The primary structure comprises 210 residues: Small ribosomal subunit protein uS3 (210 aa).

One can recognise a KH type-2 domain in the interval 38–106; it reads IRAFLKKRLY…EIFINIIEVR (69 aa).

Belongs to the universal ribosomal protein uS3 family. In terms of assembly, part of the 30S ribosomal subunit. Forms a tight complex with proteins S10 and S14.

Binds the lower part of the 30S subunit head. Binds mRNA in the 70S ribosome, positioning it for translation. The protein is Small ribosomal subunit protein uS3 of Pelobacter propionicus (strain DSM 2379 / NBRC 103807 / OttBd1).